A 459-amino-acid chain; its full sequence is Cysteine--tRNA ligase (459 aa).

Residue C28 coordinates Zn(2+). The 'HIGH' region motif lies at 30–40 (VTVYDLCHIGH). The Zn(2+) site is built by C209, H234, and E238. A 'KMSKS' region motif is present at residues 266–270 (KMSKS). Residue K269 participates in ATP binding.

It belongs to the class-I aminoacyl-tRNA synthetase family. In terms of assembly, monomer. Requires Zn(2+) as cofactor.

Its subcellular location is the cytoplasm. It carries out the reaction tRNA(Cys) + L-cysteine + ATP = L-cysteinyl-tRNA(Cys) + AMP + diphosphate. In Histophilus somni (strain 2336) (Haemophilus somnus), this protein is Cysteine--tRNA ligase.